Consider the following 55-residue polypeptide: Small ribosomal subunit protein eS31 (55 aa).

Residues Cys-21, Cys-24, Cys-39, and Cys-42 each contribute to the Zn(2+) site. The C4-type zinc-finger motif lies at 21 to 42; that stretch reads CPRCGPGVFLAEHADRFTCGRC.

The protein belongs to the eukaryotic ribosomal protein eS31 family. In terms of assembly, part of the 30S ribosomal subunit. Zn(2+) is required as a cofactor.

The sequence is that of Small ribosomal subunit protein eS31 from Thermoplasma volcanium (strain ATCC 51530 / DSM 4299 / JCM 9571 / NBRC 15438 / GSS1).